The following is a 571-amino-acid chain: Proline--tRNA ligase (571 aa).

This sequence belongs to the class-II aminoacyl-tRNA synthetase family. ProS type 1 subfamily. Homodimer.

The protein localises to the cytoplasm. It catalyses the reaction tRNA(Pro) + L-proline + ATP = L-prolyl-tRNA(Pro) + AMP + diphosphate. Its function is as follows. Catalyzes the attachment of proline to tRNA(Pro) in a two-step reaction: proline is first activated by ATP to form Pro-AMP and then transferred to the acceptor end of tRNA(Pro). As ProRS can inadvertently accommodate and process non-cognate amino acids such as alanine and cysteine, to avoid such errors it has two additional distinct editing activities against alanine. One activity is designated as 'pretransfer' editing and involves the tRNA(Pro)-independent hydrolysis of activated Ala-AMP. The other activity is designated 'posttransfer' editing and involves deacylation of mischarged Ala-tRNA(Pro). The misacylated Cys-tRNA(Pro) is not edited by ProRS. In Shewanella sp. (strain W3-18-1), this protein is Proline--tRNA ligase.